The primary structure comprises 296 residues: Ribosomal protein L11 methyltransferase (296 aa).

S-adenosyl-L-methionine-binding residues include Thr-151, Gly-172, Asp-194, and Asn-233.

The protein belongs to the methyltransferase superfamily. PrmA family.

The protein resides in the cytoplasm. The catalysed reaction is L-lysyl-[protein] + 3 S-adenosyl-L-methionine = N(6),N(6),N(6)-trimethyl-L-lysyl-[protein] + 3 S-adenosyl-L-homocysteine + 3 H(+). Functionally, methylates ribosomal protein L11. The protein is Ribosomal protein L11 methyltransferase of Dechloromonas aromatica (strain RCB).